A 558-amino-acid polypeptide reads, in one-letter code: Tyrosine N-monooxygenase (558 aa).

A helical membrane pass occupies residues 13 to 33 (VLAAPLLSSSAILKLLLFVVT). The segment at 48 to 67 (TTKCSSTTCASPPAGVGNPP) is disordered. The span at 49 to 65 (TKCSSTTCASPPAGVGN) shows a compositional bias: low complexity. Residues Arg-138, Arg-167, His-422, Arg-491, and Cys-493 each contribute to the heme b site.

This sequence belongs to the cytochrome P450 family. The cofactor is heme b.

It is found in the endoplasmic reticulum membrane. The enzyme catalyses L-tyrosine + 2 reduced [NADPH--hemoprotein reductase] + 2 O2 = (E)-4-hydroxyphenylacetaldehyde oxime + 2 oxidized [NADPH--hemoprotein reductase] + CO2 + 3 H2O + 2 H(+). It catalyses the reaction L-tyrosine + reduced [NADPH--hemoprotein reductase] + O2 = N-hydroxy-L-tyrosine + oxidized [NADPH--hemoprotein reductase] + H2O + 2 H(+). The catalysed reaction is N-hydroxy-L-tyrosine + reduced [NADPH--hemoprotein reductase] + O2 = N,N-dihydroxy-L-tyrosine + oxidized [NADPH--hemoprotein reductase] + H2O + H(+). It carries out the reaction N,N-dihydroxy-L-tyrosine + H(+) = (E)-4-hydroxyphenylacetaldehyde oxime + CO2 + H2O. The protein operates within secondary metabolite biosynthesis; dhurrin biosynthesis; dhurrin from L-tyrosine: step 1/3. In terms of biological role, cytochrome P450 involved in the biosynthesis of the cyanogenic glucoside dhurrin. Catalyzes the conversion of L-tyrosine to p-hydroxyphenylacetaldehyde oxime, via the N-hydroxy-L-tyrosine and N,N-dihydroxy-L-tyrosine intermediates. Produces the (E) isomer of the final oxime product. This Sorghum bicolor (Sorghum) protein is Tyrosine N-monooxygenase (CYP79A1).